Consider the following 235-residue polypeptide: 2-C-methyl-D-erythritol 4-phosphate cytidylyltransferase (235 aa).

This sequence belongs to the IspD/TarI cytidylyltransferase family. IspD subfamily.

The catalysed reaction is 2-C-methyl-D-erythritol 4-phosphate + CTP + H(+) = 4-CDP-2-C-methyl-D-erythritol + diphosphate. It functions in the pathway isoprenoid biosynthesis; isopentenyl diphosphate biosynthesis via DXP pathway; isopentenyl diphosphate from 1-deoxy-D-xylulose 5-phosphate: step 2/6. Functionally, catalyzes the formation of 4-diphosphocytidyl-2-C-methyl-D-erythritol from CTP and 2-C-methyl-D-erythritol 4-phosphate (MEP). This chain is 2-C-methyl-D-erythritol 4-phosphate cytidylyltransferase, found in Pseudomonas entomophila (strain L48).